Here is a 434-residue protein sequence, read N- to C-terminus: D-amino acid dehydrogenase (434 aa).

3 to 17 (VIILGGGVIGVTSAW) lines the FAD pocket.

Belongs to the DadA oxidoreductase family. FAD is required as a cofactor.

The enzyme catalyses a D-alpha-amino acid + A + H2O = a 2-oxocarboxylate + AH2 + NH4(+). It functions in the pathway amino-acid degradation; D-alanine degradation; NH(3) and pyruvate from D-alanine: step 1/1. Oxidative deamination of D-amino acids. The protein is D-amino acid dehydrogenase of Proteus mirabilis (strain HI4320).